A 221-amino-acid polypeptide reads, in one-letter code: N-(5'-phosphoribosyl)anthranilate isomerase (221 aa).

The protein belongs to the TrpF family.

It catalyses the reaction N-(5-phospho-beta-D-ribosyl)anthranilate = 1-(2-carboxyphenylamino)-1-deoxy-D-ribulose 5-phosphate. It functions in the pathway amino-acid biosynthesis; L-tryptophan biosynthesis; L-tryptophan from chorismate: step 3/5. This chain is N-(5'-phosphoribosyl)anthranilate isomerase, found in Chlorobaculum tepidum (strain ATCC 49652 / DSM 12025 / NBRC 103806 / TLS) (Chlorobium tepidum).